The sequence spans 348 residues: Eukaryotic translation initiation factor 3 subunit I (348 aa).

6 WD repeats span residues 8–49 (GHER…GTFE), 51–91 (HMGT…YTYE), 93–135 (PTPV…PKNQ), 147–186 (DGAK…FIDS), 196–238 (EKIH…KVYK), and 294–333 (GHFG…YDFE).

Belongs to the eIF-3 subunit I family. In terms of assembly, component of the eukaryotic translation initiation factor 3 (eIF-3) complex.

It localises to the cytoplasm. Functionally, component of the eukaryotic translation initiation factor 3 (eIF-3) complex, which is involved in protein synthesis of a specialized repertoire of mRNAs and, together with other initiation factors, stimulates binding of mRNA and methionyl-tRNAi to the 40S ribosome. The eIF-3 complex specifically targets and initiates translation of a subset of mRNAs involved in cell proliferation. This chain is Eukaryotic translation initiation factor 3 subunit I, found in Meyerozyma guilliermondii (strain ATCC 6260 / CBS 566 / DSM 6381 / JCM 1539 / NBRC 10279 / NRRL Y-324) (Yeast).